The primary structure comprises 491 residues: Glutamyl-tRNA(Gln) amidotransferase subunit A (491 aa).

Active-site charge relay system residues include Lys79 and Ser154. The active-site Acyl-ester intermediate is the Ser178.

It belongs to the amidase family. GatA subfamily. As to quaternary structure, heterotrimer of A, B and C subunits.

It carries out the reaction L-glutamyl-tRNA(Gln) + L-glutamine + ATP + H2O = L-glutaminyl-tRNA(Gln) + L-glutamate + ADP + phosphate + H(+). In terms of biological role, allows the formation of correctly charged Gln-tRNA(Gln) through the transamidation of misacylated Glu-tRNA(Gln) in organisms which lack glutaminyl-tRNA synthetase. The reaction takes place in the presence of glutamine and ATP through an activated gamma-phospho-Glu-tRNA(Gln). This chain is Glutamyl-tRNA(Gln) amidotransferase subunit A, found in Natranaerobius thermophilus (strain ATCC BAA-1301 / DSM 18059 / JW/NM-WN-LF).